A 146-amino-acid polypeptide reads, in one-letter code: Large ribosomal subunit protein uL15 (146 aa).

A disordered region spans residues 1-65 (MSDIQLNTLK…GQMPLQRRLP (65 aa)). Residues 24 to 34 (RGIGSGLGKTA) are compositionally biased toward gly residues.

This sequence belongs to the universal ribosomal protein uL15 family. Part of the 50S ribosomal subunit.

Its function is as follows. Binds to the 23S rRNA. The sequence is that of Large ribosomal subunit protein uL15 from Bordetella parapertussis (strain 12822 / ATCC BAA-587 / NCTC 13253).